A 345-amino-acid polypeptide reads, in one-letter code: Trans-3-hydroxy-L-proline dehydratase (345 aa).

The active-site Proton acceptor is Ser90. Residues 91-92, Asp252, and 257-258 each bind substrate; these read GS and GT.

This sequence belongs to the proline racemase family.

It carries out the reaction trans-3-hydroxy-L-proline = 1-pyrroline-2-carboxylate + H2O. Functionally, catalyzes the dehydration of trans-3-hydroxy-L-proline (t3LHyp) to Delta(1)-pyrroline-2-carboxylate (Pyr2C). May be involved in a degradation pathway that converts t3LHyp to L-proline, which would allow S.novella to grow on t3LHyp as a sole carbon source. In Ancylobacter novellus (strain ATCC 8093 / DSM 506 / JCM 20403 / CCM 1077 / IAM 12100 / NBRC 12443 / NCIMB 10456) (Starkeya novella), this protein is Trans-3-hydroxy-L-proline dehydratase.